A 205-amino-acid polypeptide reads, in one-letter code: Probable GTP-binding protein EngB (205 aa).

The EngB-type G domain occupies 25-199; sequence NGIEIAFIGY…KLSLNSSYKK (175 aa). Residues 33–40, 60–64, 78–81, 145–148, and 178–180 each bind GTP; these read GYSNTGKS, GRTQL, DLPG, TKCD, and FSS. Mg(2+) is bound by residues serine 40 and threonine 62.

The protein belongs to the TRAFAC class TrmE-Era-EngA-EngB-Septin-like GTPase superfamily. EngB GTPase family. Mg(2+) serves as cofactor.

Necessary for normal cell division and for the maintenance of normal septation. The protein is Probable GTP-binding protein EngB of Buchnera aphidicola subsp. Acyrthosiphon pisum (strain 5A).